Consider the following 218-residue polypeptide: Ras-related protein Rab-27B (218 aa).

Thr2 is modified (N-acetylthreonine). 16–24 provides a ligand contact to GTP; the sequence is GDSGVGKTT. Positions 38 to 46 match the Effector region motif; it reads FITTVGIDF. GTP contacts are provided by residues 74–78, 133–136, and 163–165; these read DTAGQ, NKAD, and SAA. Cys123 and Cys188 form a disulfide bridge. 2 S-geranylgeranyl cysteine lipidation sites follow: Cys216 and Cys218. A Cysteine methyl ester modification is found at Cys218.

It belongs to the small GTPase superfamily. Rab family. Interacts with SYTL2, SYTL4, MYRIP and MLPH. Interacts with RPH3A and RPH3A. Interacts (GDP-bound form preferentially) with DENND10.

Its subcellular location is the membrane. The protein resides in the late endosome. The catalysed reaction is GTP + H2O = GDP + phosphate + H(+). Its activity is regulated as follows. Regulated by guanine nucleotide exchange factors (GEFs) which promote the exchange of bound GDP for free GTP, GTPase activating proteins (GAPs) which increase the GTP hydrolysis activity, and GDP dissociation inhibitors which inhibit the dissociation of the nucleotide from the GTPase. Activated by GEFs such as DENND10. Functionally, small GTPase which cycles between active GTP-bound and inactive GDP-bound states. In its active state, binds to a variety of effector proteins to regulate homeostasis of late endocytic pathway, including endosomal positioning, maturation and secretion. Plays a role in NTRK2/TRKB axonal anterograde transport by facilitating the association of NTRK2/TRKB with KLC1. May be involved in targeting uroplakins to urothelial apical membranes. In Rattus norvegicus (Rat), this protein is Ras-related protein Rab-27B (Rab27b).